Here is a 512-residue protein sequence, read N- to C-terminus: Cytochrome P450 monooxygenase hkm5 (512 aa).

The helical transmembrane segment at 18–38 (LIQLVRALLWVLVITIGGAIV) threads the bilayer. N-linked (GlcNAc...) asparagine glycans are attached at residues Asn184, Asn263, Asn275, Asn374, and Asn419. Cys456 lines the heme pocket.

It belongs to the cytochrome P450 family. Heme is required as a cofactor.

Its subcellular location is the membrane. It carries out the reaction hancockiamide A + reduced [NADPH--hemoprotein reductase] + O2 = hancockiamide G + oxidized [NADPH--hemoprotein reductase] + 2 H2O + H(+). It catalyses the reaction hancockiamide B + reduced [NADPH--hemoprotein reductase] + O2 = hancockiamide C + oxidized [NADPH--hemoprotein reductase] + 2 H2O + H(+). The catalysed reaction is hancockiamide D + reduced [NADPH--hemoprotein reductase] + O2 = hancockiamide H + oxidized [NADPH--hemoprotein reductase] + 2 H2O + H(+). It functions in the pathway secondary metabolite biosynthesis. Its function is as follows. Cytochrome P450 monooxygenase; part of the gene cluster that mediates the biosynthesis of hancockiamides, an unusual new family of N-cinnamoylated piperazines. The NRPS hkm10 and the NmrA-like reductase hkm9 are proposed to convert two molecules of L-Phe to the intermediary piperazine called xenocockiamide A. Xenocockiamide A is then converted to hancockiamide D via a series of hydroxylations and O-methylations. The tyrosinase hkm6 may catalyze an aromatic hydroxylation, then the 2-oxoglutarate-dependent Fe(II) dioxygenase hkm4 and the FAD-dependent phenol hydroxylase hkm7 may catalyze consecutive hydroxylations to install 2 more hydroxy groups, and the methyltransferase hkm8 probably catalyzes two methylations using 2 molecules of S-adenosyl-L-methionine (SAM). The NRPS hkm11 activates and transfers trans-cinnamate supplied by the PAL hkm12 to hancockiamide D and produces hancockiamide A. NRPS Hkm11 has the flexibility to tolerate the bulky hancockiamide G as a substrate and the absence of the acetyl-transferase hkm3 opens up the opportunity for hkm11 to introduce a second N-cinnamoyl moiety. The cytochrome P450 monooxygenase hkm5 catalyzes the methylenedioxy bridge formation, converting hancockiamide A into hancockiamide G. Hkm5 can also convert hancockiamide B into hancockiamide C, and hancockiamide D into hancockiamide H. The N-acetyltransferase hkm3 finally transfers an acetyl group to 1-N of piperazine, converting hancockiamide A into hancockiamide B and hancockiamide G into hancockiamide C. The polypeptide is Cytochrome P450 monooxygenase hkm5 (Aspergillus hancockii).